Here is an 825-residue protein sequence, read N- to C-terminus: Extracellular exo-alpha-L-arabinofuranosidase (825 aa).

Residues 1-29 (MSRIRWRYGTAATALLVAAGLVPTATAHA) form the signal peptide. Position 58 (Glu-58) interacts with alpha-L-arabinofuranose. Residues 70 to 215 (AELVQNRSFE…ALDMVSLFPR (146 aa)) form the CBM-cenC domain. Alpha-L-arabinofuranose is bound by residues Cys-247 and 379-380 (NE). Glu-380 functions as the Proton donor/acceptor in the catalytic mechanism.

Belongs to the glycosyl hydrolase 51 family.

It is found in the secreted. The catalysed reaction is Hydrolysis of terminal non-reducing alpha-L-arabinofuranoside residues in alpha-L-arabinosides.. Involved in the degradation of arabinan and is a key enzyme in the complete degradation of the plant cell wall. Catalyzes the cleavage of terminal alpha-L-arabinofuranosyl residues of arabinan present in the arabinofuranosyl polysaccharides or oligosaccharides. It cannot act on other arabinose-containing polysaccharides and arabinoxylo-oligosaccharides. It leaves most of the polymer intact, including most of the main-chain residues and the arabinose side chains. It acts preferentially on the linear alpha-(1-&gt;2)-linked arabinofuranobiosides and alpha-(1-&gt;3)-linked arabinofuranobiosides, and is much less effective on alpha-(1-&gt;5)-linked arabinofuranobiosides. It also hydrolyzes the terminal alpha-(1-&gt;3)-linked arabinofuranotriosides in preference to the alpha-(1-&gt;5)-linked arabinofuranotriosides. The chain is Extracellular exo-alpha-L-arabinofuranosidase from Streptomyces chartreusis.